The primary structure comprises 142 residues: Galactose-6-phosphate isomerase subunit LacA (142 aa).

It belongs to the LacAB/RpiB family. As to quaternary structure, heteromultimeric protein consisting of LacA and LacB.

It carries out the reaction aldehydo-D-galactose 6-phosphate = keto-D-tagatose 6-phosphate. The protein operates within carbohydrate metabolism; D-galactose 6-phosphate degradation; D-tagatose 6-phosphate from D-galactose 6-phosphate: step 1/1. The sequence is that of Galactose-6-phosphate isomerase subunit LacA from Staphylococcus aureus (strain JH9).